Reading from the N-terminus, the 561-residue chain is Zinc finger protein 394 (561 aa).

Ser-12 carries the post-translational modification Phosphoserine. Residue Lys-40 forms a Glycyl lysine isopeptide (Lys-Gly) (interchain with G-Cter in SUMO2) linkage. Residues 43–62 (EDSLGSWEPSYPAASPDPET) form a disordered region. The SCAN box domain occupies 64–146 (RLHFRQLRYQ…AVVRALQRAL (83 aa)). The region spanning 155-230 (VTFEDMAVSL…LQEAFQGKRP (76 aa)) is the KRAB domain. Residues Lys-203 and Lys-228 each participate in a glycyl lysine isopeptide (Lys-Gly) (interchain with G-Cter in SUMO2) cross-link. The segment covering 238–247 (THEDRVEKQS) has biased composition (basic and acidic residues). Residues 238-283 (THEDRVEKQSGDPLPLKLENSPEAEGFNSISDVNKNGSIEGEDSKN) are disordered. Lys-254 participates in a covalent cross-link: Glycyl lysine isopeptide (Lys-Gly) (interchain with G-Cter in SUMO2). Residues 265–274 (NSISDVNKNG) are compositionally biased toward polar residues. A Glycyl lysine isopeptide (Lys-Gly) (interchain with G-Cter in SUMO2) cross-link involves residue Lys-282. 7 C2H2-type zinc fingers span residues 358–380 (YKCG…QRIH), 386–408 (YGCQ…QRTH), 414–436 (YTCL…QSTH), 442–463 (FKCE…QRLH), 469–491 (YKCE…HRIH), 497–519 (YGCS…QRIH), and 525–547 (YKCL…QRIH). Residue Lys-443 forms a Glycyl lysine isopeptide (Lys-Gly) (interchain with G-Cter in SUMO2) linkage.

It belongs to the krueppel C2H2-type zinc-finger protein family.

It localises to the nucleus. May be involved in transcriptional regulation. In Pan paniscus (Pygmy chimpanzee), this protein is Zinc finger protein 394 (ZNF394).